Here is a 381-residue protein sequence, read N- to C-terminus: Creatine kinase M-type (381 aa).

The region spanning 11 to 98 (KLNFKAEEEY…FDPIIQDRHG (88 aa)) is the Phosphagen kinase N-terminal domain. The region spanning 125 to 367 (YVLSSRVRTG…KLMVEMEKKL (243 aa)) is the Phosphagen kinase C-terminal domain. 128 to 132 (SSRVR) provides a ligand contact to ATP. Serine 164 carries the post-translational modification Phosphoserine. Phosphothreonine is present on threonine 166. Serine 178 is subject to Phosphoserine. Threonine 180 carries the post-translational modification Phosphothreonine. Histidine 191 lines the ATP pocket. At serine 199 the chain carries Phosphoserine. The ATP site is built by arginine 236 and arginine 292. Residues threonine 313 and threonine 322 each carry the phosphothreonine modification. Residues 320 to 325 (RGTGGV) and aspartate 335 contribute to the ATP site. Residue serine 372 is modified to Phosphoserine.

The protein belongs to the ATP:guanido phosphotransferase family. In terms of assembly, dimer of identical or non-identical chains, which can be either B (brain type) or M (muscle type). With MM being the major form in skeletal muscle and myocardium, MB existing in myocardium, and BB existing in many tissues, especially brain.

It catalyses the reaction creatine + ATP = N-phosphocreatine + ADP + H(+). Its function is as follows. Reversibly catalyzes the transfer of phosphate between ATP and various phosphogens (e.g. creatine phosphate). Creatine kinase isoenzymes play a central role in energy transduction in tissues with large, fluctuating energy demands, such as skeletal muscle, heart, brain and spermatozoa. The chain is Creatine kinase M-type (CKM) from Sus scrofa (Pig).